The chain runs to 297 residues: tRNA dimethylallyltransferase (297 aa).

Residue 10–17 coordinates ATP; sequence GITASGKS. 12–17 is a binding site for substrate; that stretch reads TASGKS. Residues 36–39 are interaction with substrate tRNA; that stretch reads DSKQ.

This sequence belongs to the IPP transferase family. Monomer. Mg(2+) is required as a cofactor.

The enzyme catalyses adenosine(37) in tRNA + dimethylallyl diphosphate = N(6)-dimethylallyladenosine(37) in tRNA + diphosphate. Functionally, catalyzes the transfer of a dimethylallyl group onto the adenine at position 37 in tRNAs that read codons beginning with uridine, leading to the formation of N6-(dimethylallyl)adenosine (i(6)A). In Wolbachia pipientis subsp. Culex pipiens (strain wPip), this protein is tRNA dimethylallyltransferase.